The primary structure comprises 240 residues: MORN repeat-containing protein 3 (240 aa).

The interval 6–35 (CPKKSESLWKGWDRKAQRNGLRSQVYAVNG) is interaction with MDM2. MORN repeat units lie at residues 38–60 (YVGE…KKGA), 62–84 (YEGD…DQQT), 91–113 (YSGW…PKEY), 114–136 (YEGD…NGDI), 137–159 (YEGQ…NGNR), 160–182 (YEGC…DHGQ), and 184–205 (FEGF…GRDE). Residues 76–100 (TLSLPDQQTGKCRRVYSGWWKGDKK) are interaction with SIRT1. An interaction with TP53 region spans residues 206 to 240 (APEPTQFPIPEVKILDPDGVLAEALAMFRKTEEGD).

In terms of assembly, interacts with MEIG1. Interacts with TP53, MDM2 and SIRT1; the interactions mediate post-transcriptional modifications of TP53 by MDM2 and SIRT1.

It is found in the cytoplasmic vesicle. It localises to the secretory vesicle. The protein resides in the acrosome. Functionally, assembles a suppression complex (suppresome) by tethering SIRT1 and MDM2 to regulate composite modifications of p53/TP53. Confers both deacetylation-mediated functional inactivation, by SIRT1, and ubiquitination-dependent degradation, by MDM2, of p53/TP53, promoting a proliferative and cell survival behaviors. May play a role in the regulation of spermatogenesis. In Homo sapiens (Human), this protein is MORN repeat-containing protein 3.